A 307-amino-acid polypeptide reads, in one-letter code: Cyclin-dependent kinase 5 activator 1 (307 aa).

Ser-8 carries the post-translational modification Phosphoserine; by CDK5. The segment at 96–136 is disordered; that stretch reads STFAQPPPAQPPAPPANQLSGSQTGVSSSVKKAPHPSVTSA. Over residues 100-110 the composition is skewed to pro residues; the sequence is QPPPAQPPAPP. A compositionally biased stretch (polar residues) spans 112–125; it reads NQLSGSQTGVSSSV. Thr-138 is modified (phosphothreonine; by CDK5).

It belongs to the cyclin-dependent kinase 5 activator family. Heterodimer composed of a catalytic subunit CDK5 and a regulatory subunit CDK5R1 (p25) and macromolecular complex composed of at least CDK5, CDK5R1 (p35) and CDK5RAP1 or CDK5RAP2 or CDK5RAP3. Only the heterodimer shows kinase activity. Interacts with EPHA4 and NGEF; may mediate the activation of NGEF by EPHA4. Interacts with RASGRF2. The complex p35/CDK5 interacts with CLOCK. The p35 form is proteolytically cleaved by calpain, giving rise to the p25 form. P35 has a 5 to 10 fold shorter half-life compared to p25. The conversion results in deregulation of the CDK5 kinase: p25/CDK5 kinase displays an increased and altered tau phosphorylation in comparison to the p35/CDK5 kinase in vivo. In terms of processing, myristoylated. A proper myristoylation signal is essential for the proper distribution of p35. Post-translationally, phosphorylation at Ser-8 and Thr-138 by CDK5 prevents calpain-mediated proteolysis. Ubiquitinated, leading to its degradation: degradation of p35 by proteasome results in down-regulation of CDK5 activity. During this process, CDK5 phosphorylates p35 and induces its ubiquitination and subsequent degradation. Ubiquitinated by the CRL2(FEM1B) complex, which recognizes the -Gly-Leu-Asp-Arg C-degron at the C-terminus, leading to its degradation. As to expression, brain and neuron specific.

Its subcellular location is the cell membrane. It is found in the cell projection. The protein localises to the neuron projection. The protein resides in the nucleus. It localises to the cytoplasm. Its subcellular location is the perinuclear region. It is found in the perikaryon. Functionally, p35 is a neuron specific activator of CDK5. The complex p35/CDK5 is required for neurite outgrowth and cortical lamination. Involved in dendritic spine morphogenesis by mediating the EFNA1-EPHA4 signaling. Activator of TPKII. The complex p35/CDK5 participates in the regulation of the circadian clock by modulating the function of CLOCK protein: phosphorylates CLOCK at 'Thr-451' and 'Thr-461' and regulates the transcriptional activity of the CLOCK-BMAL1 heterodimer in association with altered stability and subcellular distribution. The chain is Cyclin-dependent kinase 5 activator 1 (CDK5R1) from Spermophilus citellus (European ground squirrel).